A 253-amino-acid polypeptide reads, in one-letter code: MLKTRIIPCLDVADGRVVKGVNFVDLRDAGDPVEAARAYDAAGADELCFLDIHATHENRGTMYDLVTRTAEQCFMPLTVGGGVRTQQDVRALLLAGADKVSFNSAAVADPNVVAEAADRFGSQCIVVAIDAKTVAPGRWEIFTHGGRRATGIDAVEFAQDVAAKGAGEILLTSMDRDGTRSGFNLPLTRAISDAVRIPVIASGGVGTLDHLVEGVTEGGASAVLAASIFHFGEFTIGEAKAHMAAAGIPVRLA.

Residues D11 and D130 contribute to the active site.

Belongs to the HisA/HisF family. In terms of assembly, heterodimer of HisH and HisF.

The protein localises to the cytoplasm. It carries out the reaction 5-[(5-phospho-1-deoxy-D-ribulos-1-ylimino)methylamino]-1-(5-phospho-beta-D-ribosyl)imidazole-4-carboxamide + L-glutamine = D-erythro-1-(imidazol-4-yl)glycerol 3-phosphate + 5-amino-1-(5-phospho-beta-D-ribosyl)imidazole-4-carboxamide + L-glutamate + H(+). It participates in amino-acid biosynthesis; L-histidine biosynthesis; L-histidine from 5-phospho-alpha-D-ribose 1-diphosphate: step 5/9. Functionally, IGPS catalyzes the conversion of PRFAR and glutamine to IGP, AICAR and glutamate. The HisF subunit catalyzes the cyclization activity that produces IGP and AICAR from PRFAR using the ammonia provided by the HisH subunit. The polypeptide is Imidazole glycerol phosphate synthase subunit HisF (Cereibacter sphaeroides (strain ATCC 17025 / ATH 2.4.3) (Rhodobacter sphaeroides)).